A 203-amino-acid polypeptide reads, in one-letter code: E3 ubiquitin-protein ligase rnf152-B (203 aa).

The RING-type zinc finger occupies 12–55 (CQICFNYYSPRRRPKLLDCKHTCCSVCLQQMRASQKDLRCPWCR). Residues 167–187 (SGVCTVILVACVLVFLLGIVL) traverse the membrane as a helical segment.

The protein belongs to the RNF152 family.

The protein localises to the lysosome membrane. It catalyses the reaction S-ubiquitinyl-[E2 ubiquitin-conjugating enzyme]-L-cysteine + [acceptor protein]-L-lysine = [E2 ubiquitin-conjugating enzyme]-L-cysteine + N(6)-ubiquitinyl-[acceptor protein]-L-lysine.. The protein operates within protein modification; protein ubiquitination. In terms of biological role, E3 ubiquitin-protein ligase that acts as a negative regulator of mTORC1 signaling by mediating ubiquitination of RagA/RRAGA and RHEB. Catalyzes 'Lys-63'-linked polyubiquitination of RagA/RRAGA in response to amino acid starvation, thereby regulating mTORC1 signaling. Also mediates monoubiquitination of RHEB, promoting its association with the TSC-TBC complex and subsequent inhibition. Also mediates 'Lys-48'-linked polyubiquitination of target proteins and their subsequent targeting to the proteasome for degradation. The protein is E3 ubiquitin-protein ligase rnf152-B of Xenopus laevis (African clawed frog).